The following is a 536-amino-acid chain: Ribulokinase (536 aa).

The protein belongs to the ribulokinase family.

The catalysed reaction is D-ribulose + ATP = D-ribulose 5-phosphate + ADP + H(+). It carries out the reaction L-ribulose + ATP = L-ribulose 5-phosphate + ADP + H(+). It participates in carbohydrate degradation; L-arabinose degradation via L-ribulose; D-xylulose 5-phosphate from L-arabinose (bacterial route): step 2/3. The polypeptide is Ribulokinase (Staphylococcus epidermidis (strain ATCC 35984 / DSM 28319 / BCRC 17069 / CCUG 31568 / BM 3577 / RP62A)).